We begin with the raw amino-acid sequence, 262 residues long: Enoyl-[acyl-carrier-protein] reductase [NADH] FabI (262 aa).

Residues Gly13, 19–20 (SI), Gln40, 64–65 (DV), and Ile92 each bind NAD(+). A substrate-binding site is contributed by Ala95. Catalysis depends on proton acceptor residues Tyr146 and Tyr156. NAD(+) is bound by residues Lys163 and 192-196 (IRTLA).

It belongs to the short-chain dehydrogenases/reductases (SDR) family. FabI subfamily. As to quaternary structure, homotetramer.

It catalyses the reaction a 2,3-saturated acyl-[ACP] + NAD(+) = a (2E)-enoyl-[ACP] + NADH + H(+). The enzyme catalyses (2E)-butenoyl-[ACP] + NADH + H(+) = butanoyl-[ACP] + NAD(+). The catalysed reaction is (2E)-decenoyl-[ACP] + NADH + H(+) = decanoyl-[ACP] + NAD(+). It carries out the reaction (2E)-hexadecenoyl-[ACP] + NADH + H(+) = hexadecanoyl-[ACP] + NAD(+). It catalyses the reaction (2E,9Z)-hexadecadienoyl-[ACP] + NADH + H(+) = (9Z)-hexadecenoyl-[ACP] + NAD(+). The enzyme catalyses (2E)-5-methylhexenoyl-[ACP] + NADH + H(+) = 5-methylhexanoyl-[ACP] + NAD(+). The protein operates within lipid metabolism; fatty acid biosynthesis. Its pathway is cofactor biosynthesis; biotin biosynthesis. Inhibited by diazaborines, triclosan (5-chloro-2-2,4-dichlorophenoxyphenol), 1,4-disubstituted imidazoles, 1,4-benzodiazepine derivatives, naphthyridinone derivatives, luteolin and curcumin. The antibiotic diazaborine interferes with the activity by binding to the protein and NAD. Catalyzes the reduction of a carbon-carbon double bond in an enoyl moiety that is covalently linked to an acyl carrier protein (ACP). Involved in the elongation cycle of fatty acid which are used in the lipid metabolism and in the biotin biosynthesis. The polypeptide is Enoyl-[acyl-carrier-protein] reductase [NADH] FabI (fabI) (Escherichia coli (strain K12)).